The following is a 241-amino-acid chain: Acetoacetyl-CoA reductase (241 aa).

Residues 12–14 (RGI) and 82–86 (NAGIT) each bind NADP(+). Substrate-binding positions include aspartate 88 and 141 to 144 (QMGQ). Tyrosine 147 acts as the Proton acceptor in catalysis. An NADP(+)-binding site is contributed by 177 to 180 (PGYI). 178-179 (GY) serves as a coordination point for substrate.

Belongs to the short-chain dehydrogenases/reductases (SDR) family.

It is found in the cytoplasm. It carries out the reaction a (3R)-3-hydroxyacyl-CoA + NADP(+) = a 3-oxoacyl-CoA + NADPH + H(+). It functions in the pathway biopolymer metabolism; poly-(R)-3-hydroxybutanoate biosynthesis. This chain is Acetoacetyl-CoA reductase, found in Shinella zoogloeoides (Crabtreella saccharophila).